Here is a 310-residue protein sequence, read N- to C-terminus: N-acetyl-gamma-glutamyl-phosphate reductase (310 aa).

Cys117 is a catalytic residue.

The protein belongs to the NAGSA dehydrogenase family. Type 2 subfamily.

It is found in the cytoplasm. It catalyses the reaction N-acetyl-L-glutamate 5-semialdehyde + phosphate + NADP(+) = N-acetyl-L-glutamyl 5-phosphate + NADPH + H(+). Its pathway is amino-acid biosynthesis; L-arginine biosynthesis; N(2)-acetyl-L-ornithine from L-glutamate: step 3/4. Its function is as follows. Catalyzes the NADPH-dependent reduction of N-acetyl-5-glutamyl phosphate to yield N-acetyl-L-glutamate 5-semialdehyde. The polypeptide is N-acetyl-gamma-glutamyl-phosphate reductase (Brucella suis (strain ATCC 23445 / NCTC 10510)).